Reading from the N-terminus, the 363-residue chain is Peptide chain release factor 2 (363 aa).

Glutamine 251 carries the post-translational modification N5-methylglutamine.

This sequence belongs to the prokaryotic/mitochondrial release factor family. Post-translationally, methylated by PrmC. Methylation increases the termination efficiency of RF2.

It localises to the cytoplasm. Functionally, peptide chain release factor 2 directs the termination of translation in response to the peptide chain termination codons UGA and UAA. This chain is Peptide chain release factor 2, found in Helicobacter acinonychis (strain Sheeba).